Here is a 176-residue protein sequence, read N- to C-terminus: Small ribosomal subunit protein uS8c (176 aa).

The protein belongs to the universal ribosomal protein uS8 family. As to quaternary structure, part of the 30S ribosomal subunit.

It is found in the plastid. It localises to the chloroplast. Its function is as follows. One of the primary rRNA binding proteins, it binds directly to 16S rRNA central domain where it helps coordinate assembly of the platform of the 30S subunit. This is Small ribosomal subunit protein uS8c (rps8) from Stigeoclonium helveticum (Green alga).